The sequence spans 342 residues: Methionyl-tRNA formyltransferase (342 aa).

A (6S)-5,6,7,8-tetrahydrofolate-binding site is contributed by 108 to 111; it reads SLLP.

This sequence belongs to the Fmt family.

The enzyme catalyses L-methionyl-tRNA(fMet) + (6R)-10-formyltetrahydrofolate = N-formyl-L-methionyl-tRNA(fMet) + (6S)-5,6,7,8-tetrahydrofolate + H(+). In terms of biological role, attaches a formyl group to the free amino group of methionyl-tRNA(fMet). The formyl group appears to play a dual role in the initiator identity of N-formylmethionyl-tRNA by promoting its recognition by IF2 and preventing the misappropriation of this tRNA by the elongation apparatus. The protein is Methionyl-tRNA formyltransferase of Prochlorococcus marinus (strain MIT 9313).